Here is a 279-residue protein sequence, read N- to C-terminus: MRLAVAYSTGDPAGRGAGRALARLLSAEPTSCPGAVECFKAGYLTIAGFPVEAVRLEMLDEAPDPQASAVIVLSKHRAESGRKSLTVHHPGNPTEDNSLGGRPMELAVAYPALAKALLISLAKASRETGLAESYEVTLEATHHGPTTPSKPVVFAELGSTEEDWRNPLGWETLALAVEEAIKTLPQIERECIPAAGFGGTHYVPKHTRLQLESGYCIGHTIPRYAFDRGVTAEVLKNAILKSYPGPARVALVEKKSLKSPQRRMVEEASEEAGAKVEYI.

The interval 81–100 (GRKSLTVHHPGNPTEDNSLG) is disordered.

It belongs to the DtdA deacylase family. In terms of assembly, monomer. The cofactor is Zn(2+).

It carries out the reaction a D-aminoacyl-tRNA + H2O = a tRNA + a D-alpha-amino acid + H(+). The catalysed reaction is glycyl-tRNA(Ala) + H2O = tRNA(Ala) + glycine + H(+). Functionally, D-aminoacyl-tRNA deacylase with broad substrate specificity. By recycling D-aminoacyl-tRNA to D-amino acids and free tRNA molecules, this enzyme counteracts the toxicity associated with the formation of D-aminoacyl-tRNA entities in vivo. This is D-aminoacyl-tRNA deacylase from Aeropyrum pernix (strain ATCC 700893 / DSM 11879 / JCM 9820 / NBRC 100138 / K1).